The sequence spans 185 residues: Pyruvate/ketoisovalerate oxidoreductases common subunit gamma (185 aa).

Heterotetramer of one alpha, one beta, one delta and one gamma chain.

The enzyme catalyses 2 oxidized [2Fe-2S]-[ferredoxin] + pyruvate + CoA = 2 reduced [2Fe-2S]-[ferredoxin] + acetyl-CoA + CO2 + H(+). It catalyses the reaction 3-methyl-2-oxobutanoate + 2 oxidized [2Fe-2S]-[ferredoxin] + CoA = 2-methylpropanoyl-CoA + 2 reduced [2Fe-2S]-[ferredoxin] + CO2 + H(+). This chain is Pyruvate/ketoisovalerate oxidoreductases common subunit gamma (porG), found in Thermococcus litoralis (strain ATCC 51850 / DSM 5473 / JCM 8560 / NS-C).